Here is a 129-residue protein sequence, read N- to C-terminus: Small ribosomal subunit protein uS11 (129 aa).

This sequence belongs to the universal ribosomal protein uS11 family. As to quaternary structure, part of the 30S ribosomal subunit. Interacts with proteins S7 and S18. Binds to IF-3.

In terms of biological role, located on the platform of the 30S subunit, it bridges several disparate RNA helices of the 16S rRNA. Forms part of the Shine-Dalgarno cleft in the 70S ribosome. In Azoarcus sp. (strain BH72), this protein is Small ribosomal subunit protein uS11.